Reading from the N-terminus, the 528-residue chain is Na(+)/H(+) antiporter NhaB (528 aa).

A run of 11 helical transmembrane segments spans residues 23-45 (FAIL…IAGW), 66-86 (PGGL…TQVL), 95-115 (VLLL…LLLY), 130-164 (VSML…FYSI), 203-223 (LLMH…VGEP), 241-261 (IRMS…CFIV), 310-330 (LIVG…SVII), 349-369 (EEAL…GVII), 390-410 (LVIF…VFVG), 448-468 (ATPN…APLI), and 475-495 (MVMM…LAIE).

Belongs to the NhaB Na(+)/H(+) (TC 2.A.34) antiporter family.

Its subcellular location is the cell inner membrane. It carries out the reaction 2 Na(+)(in) + 3 H(+)(out) = 2 Na(+)(out) + 3 H(+)(in). Its function is as follows. Na(+)/H(+) antiporter that extrudes sodium in exchange for external protons. The polypeptide is Na(+)/H(+) antiporter NhaB (Shewanella amazonensis (strain ATCC BAA-1098 / SB2B)).